A 90-amino-acid chain; its full sequence is Lectin-1 (90 aa).

Glutamine 1 carries the post-translational modification Pyrrolidone carboxylic acid. Cysteine 46 and cysteine 71 are oxidised to a cystine.

The N-terminus is blocked. In terms of processing, contains seven disulfide bonds. Post-translationally, proteolytically cleaved. Major form may consist of cleaved, disulfide-bonded subunits.

In terms of biological role, lectin with specificity for complex N-linked glycans and O-linked glycans. Has hemagglutinating activity towards rabbit erythrocytes that is inhibited by N-acetyl-D-galactosamine. The chain is Lectin-1 from Hypnea cervicornis (Brazilian red alga).